The following is a 204-amino-acid chain: Holliday junction branch migration complex subunit RuvA (204 aa).

Residues 1-64 (MIGRVTGILV…EDAHLLFGFS (64 aa)) form a domain I region. The tract at residues 65 to 143 (HKQDRSLFRE…GLQQTDFFIK (79 aa)) is domain II. The interval 144–155 (SSHLPGIKCSKL) is flexible linker. Residues 156–204 (DQSLQLDEAVSALIALGYKPIEAEKMVKKVLKADLTSEQLIREALKAAL) form a domain III region.

This sequence belongs to the RuvA family. In terms of assembly, homotetramer. Forms an RuvA(8)-RuvB(12)-Holliday junction (HJ) complex. HJ DNA is sandwiched between 2 RuvA tetramers; dsDNA enters through RuvA and exits via RuvB. An RuvB hexamer assembles on each DNA strand where it exits the tetramer. Each RuvB hexamer is contacted by two RuvA subunits (via domain III) on 2 adjacent RuvB subunits; this complex drives branch migration. In the full resolvosome a probable DNA-RuvA(4)-RuvB(12)-RuvC(2) complex forms which resolves the HJ.

The protein localises to the cytoplasm. The RuvA-RuvB-RuvC complex processes Holliday junction (HJ) DNA during genetic recombination and DNA repair, while the RuvA-RuvB complex plays an important role in the rescue of blocked DNA replication forks via replication fork reversal (RFR). RuvA specifically binds to HJ cruciform DNA, conferring on it an open structure. The RuvB hexamer acts as an ATP-dependent pump, pulling dsDNA into and through the RuvAB complex. HJ branch migration allows RuvC to scan DNA until it finds its consensus sequence, where it cleaves and resolves the cruciform DNA. The polypeptide is Holliday junction branch migration complex subunit RuvA (Histophilus somni (strain 2336) (Haemophilus somnus)).